A 348-amino-acid polypeptide reads, in one-letter code: N-acetyl-gamma-glutamyl-phosphate reductase (348 aa).

Cys-150 is an active-site residue.

The protein belongs to the NAGSA dehydrogenase family. Type 1 subfamily.

It localises to the cytoplasm. The enzyme catalyses N-acetyl-L-glutamate 5-semialdehyde + phosphate + NADP(+) = N-acetyl-L-glutamyl 5-phosphate + NADPH + H(+). It participates in amino-acid biosynthesis; L-arginine biosynthesis; N(2)-acetyl-L-ornithine from L-glutamate: step 3/4. In terms of biological role, catalyzes the NADPH-dependent reduction of N-acetyl-5-glutamyl phosphate to yield N-acetyl-L-glutamate 5-semialdehyde. The protein is N-acetyl-gamma-glutamyl-phosphate reductase of Symbiobacterium thermophilum (strain DSM 24528 / JCM 14929 / IAM 14863 / T).